The sequence spans 267 residues: uncharacterized protein (267 aa).

The chain crosses the membrane as a helical span at residues 30–52 (FMRIFLLFLFFVLFTFGVEGYVI).

The protein localises to the membrane. This is an uncharacterized protein from Aquifex aeolicus (strain VF5).